Reading from the N-terminus, the 478-residue chain is Endoglucanase 18 (478 aa).

Residues 1–21 (MGKLLVVMLIGMFLAFESLEA) form the signal peptide. N29 carries N-linked (GlcNAc...) asparagine glycosylation. The Nucleophile role is filled by D76. H398 is a catalytic residue. The interval 433-452 (HTGAIVGGPNSSDQYSDKRT) is disordered. N442 carries an N-linked (GlcNAc...) asparagine glycan. Residues D449 and E458 contribute to the active site.

This sequence belongs to the glycosyl hydrolase 9 (cellulase E) family.

It localises to the secreted. The catalysed reaction is Endohydrolysis of (1-&gt;4)-beta-D-glucosidic linkages in cellulose, lichenin and cereal beta-D-glucans.. The polypeptide is Endoglucanase 18 (Arabidopsis thaliana (Mouse-ear cress)).